Reading from the N-terminus, the 208-residue chain is FMN-dependent NADH:quinone oxidoreductase (208 aa).

FMN contacts are provided by residues Ser9 and 15 to 17 (SHS).

Belongs to the azoreductase type 1 family. Homodimer. FMN serves as cofactor.

It catalyses the reaction 2 a quinone + NADH + H(+) = 2 a 1,4-benzosemiquinone + NAD(+). The enzyme catalyses N,N-dimethyl-1,4-phenylenediamine + anthranilate + 2 NAD(+) = 2-(4-dimethylaminophenyl)diazenylbenzoate + 2 NADH + 2 H(+). Functionally, quinone reductase that provides resistance to thiol-specific stress caused by electrophilic quinones. Its function is as follows. Also exhibits azoreductase activity. Catalyzes the reductive cleavage of the azo bond in aromatic azo compounds to the corresponding amines. This is FMN-dependent NADH:quinone oxidoreductase from Bordetella petrii (strain ATCC BAA-461 / DSM 12804 / CCUG 43448).